We begin with the raw amino-acid sequence, 96 residues long: Evasin P1100 (96 aa).

Positions Met-1–Ala-28 are cleaved as a signal peptide. Disulfide bonds link Cys-48-Cys-67, Cys-52-Cys-69, and Cys-63-Cys-80. Asn-51 is a glycosylation site (N-linked (GlcNAc...) asparagine). Residue Asn-74 is glycosylated (N-linked (GlcNAc...) asparagine).

The protein resides in the secreted. Its function is as follows. Salivary chemokine-binding protein which binds to host chemokines CXCL1, CXCL2, CXCL3, CXCL5, CXCL6, CXCL10, CXCL11 and CXCL13. The polypeptide is Evasin P1100 (Ixodes ricinus (Common tick)).